A 688-amino-acid chain; its full sequence is Translation initiation factor IF-2 (688 aa).

Basic and acidic residues-rich tracts occupy residues G53 to E62 and K86 to N95. Residues G53–E100 form a disordered region. Residues K187–E354 enclose the tr-type G domain. Positions G196–T203 are G1. A GTP-binding site is contributed by G196–T203. A G2 region spans residues G221–H225. The segment at D242 to G245 is G3. Residues D242–H246 and N296–D299 contribute to the GTP site. The tract at residues N296 to D299 is G4. The tract at residues S332–H334 is G5.

Belongs to the TRAFAC class translation factor GTPase superfamily. Classic translation factor GTPase family. IF-2 subfamily.

It localises to the cytoplasm. One of the essential components for the initiation of protein synthesis. Protects formylmethionyl-tRNA from spontaneous hydrolysis and promotes its binding to the 30S ribosomal subunits. Also involved in the hydrolysis of GTP during the formation of the 70S ribosomal complex. This Clostridium botulinum (strain ATCC 19397 / Type A) protein is Translation initiation factor IF-2.